We begin with the raw amino-acid sequence, 422 residues long: Phthiocerol/phthiodiolone dimycocerosyl transferase (422 aa).

Histidine 124 serves as the catalytic Proton acceptor.

It belongs to the acyltransferase PapA5 family. In terms of assembly, monomer. Interacts directly with the acyl carrier protein (ACP) domain of the mycocerosic acid synthase (mas) protein.

It carries out the reaction 2 a mycocerosyl-[mycocerosic acid synthase] + a phthiocerol = a dimycocerosyl phthiocerol + 2 holo-[mycocerosic acid synthase].. The enzyme catalyses 2 a mycocerosyl-[mycocerosic acid synthase] + a phthiodiolone = a dimycocerosyl phthiodiolone + 2 holo-[mycocerosic acid synthase].. The catalysed reaction is 2 a mycocerosyl-[mycocerosic acid synthase] + a phenolphthiocerol = a dimycocerosyl phenolphthiocerol + 2 holo-[mycocerosic acid synthase].. In terms of biological role, catalyzes diesterification of phthiocerol, phthiodiolone, and phenolphthiocerol with mycocerosic acids, the final step in the phthiocerol, phthiodiolone and phenolphthiocerol dimycocerosate esters (PDIM) synthesis. Can directly transfer the mycocerosate bound to the mycocerosic acid synthase (mas) onto the substrate alcohols. In Mycobacterium tuberculosis (strain ATCC 25177 / H37Ra), this protein is Phthiocerol/phthiodiolone dimycocerosyl transferase (papA5).